We begin with the raw amino-acid sequence, 142 residues long: Transcription antitermination protein NusB (142 aa).

The protein belongs to the NusB family.

Its function is as follows. Involved in transcription antitermination. Required for transcription of ribosomal RNA (rRNA) genes. Binds specifically to the boxA antiterminator sequence of the ribosomal RNA (rrn) operons. In Streptomyces coelicolor (strain ATCC BAA-471 / A3(2) / M145), this protein is Transcription antitermination protein NusB.